We begin with the raw amino-acid sequence, 432 residues long: Enolase (432 aa).

(2R)-2-phosphoglycerate is bound at residue Q167. E209 acts as the Proton donor in catalysis. Mg(2+) is bound by residues D246, E291, and D318. Residues K343, R372, S373, and K394 each coordinate (2R)-2-phosphoglycerate. K343 (proton acceptor) is an active-site residue.

The protein belongs to the enolase family. In terms of assembly, component of the RNA degradosome, a multiprotein complex involved in RNA processing and mRNA degradation. Mg(2+) serves as cofactor.

The protein localises to the cytoplasm. It localises to the secreted. Its subcellular location is the cell surface. The enzyme catalyses (2R)-2-phosphoglycerate = phosphoenolpyruvate + H2O. Its pathway is carbohydrate degradation; glycolysis; pyruvate from D-glyceraldehyde 3-phosphate: step 4/5. Its function is as follows. Catalyzes the reversible conversion of 2-phosphoglycerate (2-PG) into phosphoenolpyruvate (PEP). It is essential for the degradation of carbohydrates via glycolysis. This is Enolase from Aliivibrio fischeri (strain ATCC 700601 / ES114) (Vibrio fischeri).